A 395-amino-acid chain; its full sequence is Probable FMNH2-dependent monooxygenase SfnC (395 aa).

Functionally, involved in the dimethyl sulfide degradation pathway. This Pseudomonas putida (Arthrobacter siderocapsulatus) protein is Probable FMNH2-dependent monooxygenase SfnC.